A 758-amino-acid polypeptide reads, in one-letter code: Vitamin K-dependent gamma-carboxylase (758 aa).

The tract at residues 1 to 31 (MAVSARSARSPPDSDKVQKDKAGQTSGRRQG) is disordered. Ala2 is subject to N-acetylalanine. The Cytoplasmic portion of the chain corresponds to 2–60 (AVSARSARSPPDSDKVQKDKAGQTSGRRQGSRMGKLLGFEWTDVSSWGKLVTLLNRPTD). Basic and acidic residues predominate over residues 12–22 (PDSDKVQKDKA). Residues 61-81 (PASLAVFRFLFGLMMVLDIPQ) traverse the membrane as a helical segment. Residues 82-113 (ERGLSSLDRRYLDGLEVCRFPLLDALQPLPLD) lie on the Lumenal side of the membrane. Cys99 and Cys450 are disulfide-bonded. The chain crosses the membrane as a helical span at residues 114 to 134 (WMYLVYTIMFLGALGMMLGLR). The Cytoplasmic segment spans residues 135–136 (YR). Residues 137–157 (ISCVLFLLPYWYVFLLDKTSW) form a helical membrane-spanning segment. The Lumenal portion of the chain corresponds to 158 to 292 (NNHSYLYGLL…VSYFHCMNSQ (135 aa)). Residues 293–313 (LFSIGMFPYVMLASSPLFCSP) traverse the membrane as a helical segment. The Cytoplasmic segment spans residues 314–361 (EWPRKLVAHCPKRLQELLPLRTAPQPSASCVYKRSRAKGGQKPGLRHR). A helical transmembrane segment spans residues 362–382 (LGAAFTLLYLLEQLFLPYSHF). Topologically, residues 383 to 758 (LTQGYNNWTN…PNADAVHSEF (376 aa)) are lumenal. The segment at 727–758 (PFEPVGEPSPSNTDSSNPNPSEPNADAVHSEF) is disordered. Positions 734 to 750 (PSPSNTDSSNPNPSEPN) are enriched in low complexity.

It belongs to the vitamin K-dependent gamma-carboxylase family. In terms of assembly, monomer. May interact with CALU.

The protein localises to the endoplasmic reticulum membrane. The enzyme catalyses 4-carboxy-L-glutamyl-[protein] + 2,3-epoxyphylloquinone + H2O + H(+) = phylloquinol + L-glutamyl-[protein] + CO2 + O2. Its function is as follows. Mediates the vitamin K-dependent carboxylation of glutamate residues to calcium-binding gamma-carboxyglutamate (Gla) residues with the concomitant conversion of the reduced hydroquinone form of vitamin K to vitamin K epoxide. Catalyzes gamma-carboxylation of various proteins, such as blood coagulation factors (F2, F7, F9 and F10), osteocalcin (BGLAP) or matrix Gla protein (MGP). The polypeptide is Vitamin K-dependent gamma-carboxylase (GGCX) (Delphinapterus leucas (Beluga whale)).